The chain runs to 262 residues: Ribosomal RNA small subunit methyltransferase A (262 aa).

Positions 19, 21, 44, 65, 90, and 109 each coordinate S-adenosyl-L-methionine. The interval 218–246 is disordered; that stretch reads LPNNLPGPLRERAEEALAGLGHGPDARAE.

The protein belongs to the class I-like SAM-binding methyltransferase superfamily. rRNA adenine N(6)-methyltransferase family. RsmA subfamily.

It localises to the cytoplasm. It catalyses the reaction adenosine(1518)/adenosine(1519) in 16S rRNA + 4 S-adenosyl-L-methionine = N(6)-dimethyladenosine(1518)/N(6)-dimethyladenosine(1519) in 16S rRNA + 4 S-adenosyl-L-homocysteine + 4 H(+). Its function is as follows. Specifically dimethylates two adjacent adenosines (A1518 and A1519) in the loop of a conserved hairpin near the 3'-end of 16S rRNA in the 30S particle. May play a critical role in biogenesis of 30S subunits. The chain is Ribosomal RNA small subunit methyltransferase A from Rubrobacter xylanophilus (strain DSM 9941 / JCM 11954 / NBRC 16129 / PRD-1).